We begin with the raw amino-acid sequence, 534 residues long: ATP synthase subunit alpha 2 (534 aa).

ATP is bound at residue 175–182; it reads GDRQTGKT. A disordered region spans residues 506–534; sequence FQPAPEPETAPKTKTDIKPKPKAAGGESS. Over residues 514–524 the composition is skewed to basic and acidic residues; sequence TAPKTKTDIKP.

This sequence belongs to the ATPase alpha/beta chains family. In terms of assembly, F-type ATPases have 2 components, CF(1) - the catalytic core - and CF(0) - the membrane proton channel. CF(1) has five subunits: alpha(3), beta(3), gamma(1), delta(1), epsilon(1). CF(0) has three main subunits: a(1), b(2) and c(9-12). The alpha and beta chains form an alternating ring which encloses part of the gamma chain. CF(1) is attached to CF(0) by a central stalk formed by the gamma and epsilon chains, while a peripheral stalk is formed by the delta and b chains.

Its subcellular location is the cell inner membrane. It carries out the reaction ATP + H2O + 4 H(+)(in) = ADP + phosphate + 5 H(+)(out). In terms of biological role, produces ATP from ADP in the presence of a proton gradient across the membrane. The alpha chain is a regulatory subunit. This is ATP synthase subunit alpha 2 from Albidiferax ferrireducens (strain ATCC BAA-621 / DSM 15236 / T118) (Rhodoferax ferrireducens).